A 79-amino-acid polypeptide reads, in one-letter code: Small ribosomal subunit protein bS18 (79 aa).

Belongs to the bacterial ribosomal protein bS18 family. Part of the 30S ribosomal subunit. Forms a tight heterodimer with protein bS6.

Its function is as follows. Binds as a heterodimer with protein bS6 to the central domain of the 16S rRNA, where it helps stabilize the platform of the 30S subunit. This Bacillus velezensis (strain DSM 23117 / BGSC 10A6 / LMG 26770 / FZB42) (Bacillus amyloliquefaciens subsp. plantarum) protein is Small ribosomal subunit protein bS18.